Here is a 1080-residue protein sequence, read N- to C-terminus: uncharacterized protein (1080 aa).

The N-terminal stretch at Met1–Ala17 is a signal peptide. Residues Asp18–Lys1042 are Extracellular-facing. Residues Asn439, Asn664, and Asn875 are each glycosylated (N-linked (GlcNAc...) asparagine; by host). Residues Ile1043–Thr1063 traverse the membrane as a helical segment. Over Leu1064–Pro1080 the chain is Cytoplasmic.

Its subcellular location is the host membrane. This is an uncharacterized protein from Ostreid herpesvirus 1 (isolate France) (OsHV-1).